The chain runs to 657 residues: Glycogen debranching enzyme (657 aa).

Asp-336 serves as the catalytic Nucleophile. Residue Glu-371 is the Proton donor of the active site. Over residues 458 to 467 (NEANGEENRD) the composition is skewed to basic and acidic residues. Residues 458-479 (NEANGEENRDGTNNNYSNNHGK) form a disordered region.

The protein belongs to the glycosyl hydrolase 13 family.

The catalysed reaction is Hydrolysis of (1-&gt;6)-alpha-D-glucosidic linkages to branches with degrees of polymerization of three or four glucose residues in limit dextrin.. It participates in glycan degradation; glycogen degradation. Its function is as follows. Removes maltotriose and maltotetraose chains that are attached by 1,6-alpha-linkage to the limit dextrin main chain, generating a debranched limit dextrin. In Escherichia coli (strain 55989 / EAEC), this protein is Glycogen debranching enzyme.